Consider the following 275-residue polypeptide: NH(3)-dependent NAD(+) synthetase (275 aa).

Position 46–53 (46–53 (GISGGQDS)) interacts with ATP. Position 52 (Asp-52) interacts with Mg(2+). Arg-140 is a deamido-NAD(+) binding site. An ATP-binding site is contributed by Thr-160. Residue Glu-165 participates in Mg(2+) binding. Deamido-NAD(+)-binding residues include Lys-173 and Asp-180. Residues Lys-189 and Thr-211 each coordinate ATP. Deamido-NAD(+) is bound at residue 260–261 (HK).

Belongs to the NAD synthetase family. In terms of assembly, homodimer.

It catalyses the reaction deamido-NAD(+) + NH4(+) + ATP = AMP + diphosphate + NAD(+) + H(+). Its pathway is cofactor biosynthesis; NAD(+) biosynthesis; NAD(+) from deamido-NAD(+) (ammonia route): step 1/1. Functionally, catalyzes the ATP-dependent amidation of deamido-NAD to form NAD. Uses ammonia as a nitrogen source. In Escherichia coli O8 (strain IAI1), this protein is NH(3)-dependent NAD(+) synthetase.